The primary structure comprises 270 residues: Thiazole synthase (270 aa).

Lys111 functions as the Schiff-base intermediate with DXP in the catalytic mechanism. Residues Gly172, 198 to 199, and 220 to 221 each bind 1-deoxy-D-xylulose 5-phosphate; these read AG and NS. The tract at residues 249-270 is disordered; that stretch reads AGRLPTRAQASPSSPTTGKVND. Positions 256-270 are enriched in polar residues; the sequence is AQASPSSPTTGKVND.

It belongs to the ThiG family. As to quaternary structure, homotetramer. Forms heterodimers with either ThiH or ThiS.

Its subcellular location is the cytoplasm. It catalyses the reaction [ThiS sulfur-carrier protein]-C-terminal-Gly-aminoethanethioate + 2-iminoacetate + 1-deoxy-D-xylulose 5-phosphate = [ThiS sulfur-carrier protein]-C-terminal Gly-Gly + 2-[(2R,5Z)-2-carboxy-4-methylthiazol-5(2H)-ylidene]ethyl phosphate + 2 H2O + H(+). It participates in cofactor biosynthesis; thiamine diphosphate biosynthesis. Functionally, catalyzes the rearrangement of 1-deoxy-D-xylulose 5-phosphate (DXP) to produce the thiazole phosphate moiety of thiamine. Sulfur is provided by the thiocarboxylate moiety of the carrier protein ThiS. In vitro, sulfur can be provided by H(2)S. This chain is Thiazole synthase, found in Synechococcus sp. (strain WH7803).